The primary structure comprises 248 residues: Ubiquinone biosynthesis O-methyltransferase (248 aa).

Arg41, Gly72, Asp93, and Met136 together coordinate S-adenosyl-L-methionine.

Belongs to the methyltransferase superfamily. UbiG/COQ3 family.

The catalysed reaction is a 3-demethylubiquinol + S-adenosyl-L-methionine = a ubiquinol + S-adenosyl-L-homocysteine + H(+). It carries out the reaction a 3-(all-trans-polyprenyl)benzene-1,2-diol + S-adenosyl-L-methionine = a 2-methoxy-6-(all-trans-polyprenyl)phenol + S-adenosyl-L-homocysteine + H(+). The protein operates within cofactor biosynthesis; ubiquinone biosynthesis. In terms of biological role, O-methyltransferase that catalyzes the 2 O-methylation steps in the ubiquinone biosynthetic pathway. This is Ubiquinone biosynthesis O-methyltransferase from Brucella melitensis biotype 2 (strain ATCC 23457).